The sequence spans 400 residues: Succinate--glutarate CoA-transferase (400 aa).

Residue D181 is the Nucleophile of the active site.

It belongs to the CoA-transferase III family.

It carries out the reaction glutarate + succinyl-CoA = glutaryl-CoA + succinate. It participates in amino-acid degradation. The protein operates within cofactor biosynthesis; biotin biosynthesis. Functionally, is involved in L-lysine degradation and provides glutaryl-CoA for biotin synthesis. Catalyzes the conversion of glutarate to glutaryl-CoA via the transfer of CoA from succinyl-CoA. In Agrobacterium fabrum (strain C58 / ATCC 33970) (Agrobacterium tumefaciens (strain C58)), this protein is Succinate--glutarate CoA-transferase.